Reading from the N-terminus, the 1035-residue chain is POM121-like protein 2 (1035 aa).

6 disordered regions span residues 1 to 37 (MGSFLSKLELSPSSPAQVRTDLPERPTKRRPPQPLHQ), 177 to 213 (LFPESLDSKRRSPETRPSAFKPLMKNGTLTSFVPRPG), 286 to 343 (IKKE…LGYA), 415 to 508 (LGPL…QSTL), 754 to 791 (SPLGSSSRPPFPLSQGANPQPAFGATNGQKQGPSQPAL), and 972 to 1035 (NTPV…AYKK). Residues 27–37 (TKRRPPQPLHQ) are compositionally biased toward basic residues. Low complexity predominate over residues 309-319 (GGSESSGQQNQ). Composition is skewed to polar residues over residues 320-330 (KIPQLPSSPEN), 420-431 (SPQSTGEATSVA), and 445-462 (GCSQSELLPGTSPDSKPT). Over residues 464–481 (TFILLTPTSPTLPVTDTT) the composition is skewed to low complexity. Positions 493-502 (PMPPDPPAPP) are enriched in pro residues. A compositionally biased stretch (low complexity) spans 1000–1016 (RGPFRSSASSFSIGAKS). Basic residues predominate over residues 1017–1035 (KTPKNREKGHSRRHHAYKK).

This sequence belongs to the POM121 family.

The sequence is that of POM121-like protein 2 (POM121L2) from Homo sapiens (Human).